The following is a 213-amino-acid chain: Chloramphenicol acetyltransferase 3 (213 aa).

H189 serves as the catalytic Proton acceptor.

This sequence belongs to the chloramphenicol acetyltransferase family. In terms of assembly, homotrimer.

It carries out the reaction chloramphenicol + acetyl-CoA = chloramphenicol 3-acetate + CoA. Its function is as follows. This enzyme is an effector of chloramphenicol resistance in bacteria. This is Chloramphenicol acetyltransferase 3 (cat3) from Escherichia coli.